The chain runs to 270 residues: Phosphatidylglycerol--prolipoprotein diacylglyceryl transferase (270 aa).

Transmembrane regions (helical) follow at residues 18–38 (ITIY…LWLA), 55–75 (LVLF…VLFE), 90–110 (WQGG…GAVF), and 115–135 (GLSF…GQAI). R137 contributes to the a 1,2-diacyl-sn-glycero-3-phospho-(1'-sn-glycerol) binding site. 3 consecutive transmembrane segments (helical) span residues 177–197 (HPTF…LLWL), 205–225 (GELF…IEGM), and 236–256 (LRAA…LWIV).

Belongs to the Lgt family.

Its subcellular location is the cell membrane. It catalyses the reaction L-cysteinyl-[prolipoprotein] + a 1,2-diacyl-sn-glycero-3-phospho-(1'-sn-glycerol) = an S-1,2-diacyl-sn-glyceryl-L-cysteinyl-[prolipoprotein] + sn-glycerol 1-phosphate + H(+). The protein operates within protein modification; lipoprotein biosynthesis (diacylglyceryl transfer). Catalyzes the transfer of the diacylglyceryl group from phosphatidylglycerol to the sulfhydryl group of the N-terminal cysteine of a prolipoprotein, the first step in the formation of mature lipoproteins. The polypeptide is Phosphatidylglycerol--prolipoprotein diacylglyceryl transferase (Geobacillus kaustophilus (strain HTA426)).